A 104-amino-acid polypeptide reads, in one-letter code: Large ribosomal subunit protein uL24 (104 aa).

This sequence belongs to the universal ribosomal protein uL24 family. As to quaternary structure, part of the 50S ribosomal subunit.

Its function is as follows. One of two assembly initiator proteins, it binds directly to the 5'-end of the 23S rRNA, where it nucleates assembly of the 50S subunit. In terms of biological role, one of the proteins that surrounds the polypeptide exit tunnel on the outside of the subunit. The polypeptide is Large ribosomal subunit protein uL24 (Anaplasma phagocytophilum (strain HZ)).